Here is a 209-residue protein sequence, read N- to C-terminus: Pyrrolidone-carboxylate peptidase (209 aa).

Catalysis depends on residues glutamate 79, cysteine 142, and histidine 164.

The protein belongs to the peptidase C15 family. Homotetramer.

Its subcellular location is the cytoplasm. It catalyses the reaction Release of an N-terminal pyroglutamyl group from a polypeptide, the second amino acid generally not being Pro.. In terms of biological role, removes 5-oxoproline from various penultimate amino acid residues except L-proline. The polypeptide is Pyrrolidone-carboxylate peptidase (Saccharolobus islandicus (strain Y.N.15.51 / Yellowstone #2) (Sulfolobus islandicus)).